The sequence spans 231 residues: RING finger protein 141 (231 aa).

Gly-2 is lipidated: N-myristoyl glycine. The RING-type zinc-finger motif lies at 156–193 (CCICMDGRADLILPCAHSFCQKCIDKWSDRHRNCPICR).

It is found in the membrane. Functionally, may be involved in spermatogenesis. This is RING finger protein 141 (RNF141) from Canis lupus familiaris (Dog).